The chain runs to 224 residues: MLLRQYINVPRLGEIMNLKELTVILIIPIVYLGVCGCFEIVPKSFYDNFSSYNVGDKAPFGEWKVKEGGFKIEAILSEDKKTLNKVAVPINNGIIYIDKNYTDFKFIVDIKRLEESDSPKIYFRLINNANAGYYIDIEGFDRGYVLYKFNGTKVEKLAESYDAAPAGTDFYRYEVVAKDNKIIFLAGGQKYIEYTDNNTPILKGGIGIGGGRAYYDNVRVEPIE.

Residues 21-41 form a helical membrane-spanning segment; the sequence is LTVILIIPIVYLGVCGCFEIV.

The protein localises to the membrane. This is an uncharacterized protein from Methanocaldococcus jannaschii (strain ATCC 43067 / DSM 2661 / JAL-1 / JCM 10045 / NBRC 100440) (Methanococcus jannaschii).